Consider the following 602-residue polypeptide: Exopolysaccharide phosphotransferase SCO2594 (602 aa).

The tract at residues 251 to 271 (PRAGEDLDAGDGAAGGPRPGL) is disordered.

This sequence belongs to the stealth family.

The polypeptide is Exopolysaccharide phosphotransferase SCO2594 (Streptomyces coelicolor (strain ATCC BAA-471 / A3(2) / M145)).